Reading from the N-terminus, the 316-residue chain is Ribosomal RNA small subunit methyltransferase H (316 aa).

S-adenosyl-L-methionine-binding positions include 35–37 (AGH), Asp-55, Phe-84, Asp-105, and Gln-112.

The protein belongs to the methyltransferase superfamily. RsmH family.

It localises to the cytoplasm. It catalyses the reaction cytidine(1402) in 16S rRNA + S-adenosyl-L-methionine = N(4)-methylcytidine(1402) in 16S rRNA + S-adenosyl-L-homocysteine + H(+). Its function is as follows. Specifically methylates the N4 position of cytidine in position 1402 (C1402) of 16S rRNA. The chain is Ribosomal RNA small subunit methyltransferase H from Streptococcus pneumoniae (strain Hungary19A-6).